A 162-amino-acid polypeptide reads, in one-letter code: Peptidyl-prolyl cis-trans isomerase (162 aa).

N-acetylserine is present on Ser2. Positions 5-161 (YFDVEADGQP…ARIVVAKSGE (157 aa)) constitute a PPIase cyclophilin-type domain. Residues Lys29 and Lys42 each participate in a glycyl lysine isopeptide (Lys-Gly) (interchain with G-Cter in ubiquitin) cross-link. Thr71 carries the post-translational modification Phosphothreonine. Residues Lys123 and Lys139 each participate in a glycyl lysine isopeptide (Lys-Gly) (interchain with G-Cter in ubiquitin) cross-link. A phosphoserine mark is found at Ser142 and Ser145. Glycyl lysine isopeptide (Lys-Gly) (interchain with G-Cter in ubiquitin) cross-links involve residues Lys151 and Lys158.

It belongs to the cyclophilin-type PPIase family. PPIase A subfamily. As to quaternary structure, interacts with a complex composed of SIN3 and RPD3. Identified in the Set3C complex with HOS2, HST1, SNT1, SIF2, HOS4/YIL112W and SET3.

It is found in the cytoplasm. The protein localises to the nucleus. It localises to the mitochondrion intermembrane space. It catalyses the reaction [protein]-peptidylproline (omega=180) = [protein]-peptidylproline (omega=0). With respect to regulation, binds cyclosporin A (CsA). CsA mediates some of its effects via an inhibitory action on PPIase. Its function is as follows. PPIases accelerate the folding of proteins. It catalyzes the cis-trans isomerization of proline imidic peptide bonds in oligopeptides. Involved in histone deacetylase complexes, suggesting a function in chromatin. Imports fructose-1,6-bisphosphatase (FBPase) into the intermediate vacuole import and degradation (Vid) vesicles. Regulates the meiotic gene program via the Set3C histone deacetylase complex to promote efficient sporulation, and the prolyl-isomerase activity is required for this function. This chain is Peptidyl-prolyl cis-trans isomerase (CPR1), found in Saccharomyces cerevisiae (strain ATCC 204508 / S288c) (Baker's yeast).